We begin with the raw amino-acid sequence, 235 residues long: ATP-dependent dethiobiotin synthetase BioD (235 aa).

12-17 contributes to the ATP binding site; sequence GVGKTF. Residue threonine 16 coordinates Mg(2+). Residue lysine 37 is part of the active site. Serine 41 provides a ligand contact to substrate. ATP-binding positions include aspartate 51, 112–115, and 202–204; these read EGAG and PKL. Mg(2+) is bound by residues aspartate 51 and glutamate 112.

It belongs to the dethiobiotin synthetase family. In terms of assembly, homodimer. The cofactor is Mg(2+).

It is found in the cytoplasm. The enzyme catalyses (7R,8S)-7,8-diammoniononanoate + CO2 + ATP = (4R,5S)-dethiobiotin + ADP + phosphate + 3 H(+). It participates in cofactor biosynthesis; biotin biosynthesis; biotin from 7,8-diaminononanoate: step 1/2. Its function is as follows. Catalyzes a mechanistically unusual reaction, the ATP-dependent insertion of CO2 between the N7 and N8 nitrogen atoms of 7,8-diaminopelargonic acid (DAPA, also called 7,8-diammoniononanoate) to form a ureido ring. The chain is ATP-dependent dethiobiotin synthetase BioD from Bacillus licheniformis (strain ATCC 14580 / DSM 13 / JCM 2505 / CCUG 7422 / NBRC 12200 / NCIMB 9375 / NCTC 10341 / NRRL NRS-1264 / Gibson 46).